Reading from the N-terminus, the 355-residue chain is Erythronate-4-phosphate dehydrogenase (355 aa).

Substrate is bound by residues Ser-45 and Thr-66. Asp-146 serves as a coordination point for NAD(+). Arg-206 is an active-site residue. Asp-229 is a binding site for NAD(+). Glu-234 is an active-site residue. His-251 serves as the catalytic Proton donor. Gly-254 provides a ligand contact to NAD(+). Substrate is bound at residue Tyr-255.

Belongs to the D-isomer specific 2-hydroxyacid dehydrogenase family. PdxB subfamily. As to quaternary structure, homodimer.

It localises to the cytoplasm. It catalyses the reaction 4-phospho-D-erythronate + NAD(+) = (R)-3-hydroxy-2-oxo-4-phosphooxybutanoate + NADH + H(+). Its pathway is cofactor biosynthesis; pyridoxine 5'-phosphate biosynthesis; pyridoxine 5'-phosphate from D-erythrose 4-phosphate: step 2/5. Functionally, catalyzes the oxidation of erythronate-4-phosphate to 3-hydroxy-2-oxo-4-phosphonooxybutanoate. The polypeptide is Erythronate-4-phosphate dehydrogenase (Acinetobacter baumannii (strain ACICU)).